The sequence spans 224 residues: Claudin-19 (224 aa).

Residues 1-7 are Cytoplasmic-facing; it reads MANSGLQ. Residues 8–28 form a helical membrane-spanning segment; the sequence is LLGYFLALGGWVGIIASTALP. Over 29 to 81 the chain is Extracellular; it reads QWKQSSYAGDAIITAVGLYEGLWMSCASQSTGQVQCKLYDSLLALDGHIQSAR. A disulfide bridge connects residues cysteine 54 and cysteine 64. A helical transmembrane segment spans residues 82-102; the sequence is ALMVVAVLLGFVAMVLSVVGM. Residues 103–117 lie on the Cytoplasmic side of the membrane; that stretch reads KCTRVGDSNPIAKGR. Residues 118 to 138 traverse the membrane as a helical segment; the sequence is VAIAGGALFILAGLCTLTAVS. Topologically, residues 139–160 are extracellular; that stretch reads WYATLVTQEFFNPSTPVNARYE. A helical transmembrane segment spans residues 161–181; sequence FGPALFVGWASAGLAVLGGSF. The Cytoplasmic segment spans residues 182–224; sequence LCCTCPEPERPNSSPQPYRPGPSAAAREPVVKLPASAKGPLGV. The tract at residues 191–224 is disordered; that stretch reads RPNSSPQPYRPGPSAAAREPVVKLPASAKGPLGV.

This sequence belongs to the claudin family. Can form homo- and heteropolymeric tight junction strands. Interacts with other claudins including CLDN3, CLDN10, CLDN16 and CLDN18 with highest affinity for CLDN16. Interacts (via PDZ-binding motif TRV) with TJP1 (via PDZ domain).

It localises to the cell junction. It is found in the tight junction. The protein resides in the cell membrane. The catalysed reaction is Mg(2+)(in) = Mg(2+)(out). It catalyses the reaction Ca(2+)(in) = Ca(2+)(out). The enzyme catalyses Na(+)(in) = Na(+)(out). It carries out the reaction K(+)(in) = K(+)(out). The catalysed reaction is Rb(+)(in) = Rb(+)(out). It catalyses the reaction Cs(+)(in) = Cs(+)(out). The enzyme catalyses Li(+)(in) = Li(+)(out). Forms paracellular channels: coassembles with CLDN16 into tight junction strands with cation-selective channels through the strands, conveying epithelial permeability in a process known as paracellular tight junction permeability. Involved in the maintenance of ion gradients along the nephron. In the thick ascending limb (TAL) of Henle's loop, facilitates sodium paracellular permeability from the interstitial compartment to the lumen, contributing to the lumen-positive transepithelial potential that drives paracellular magnesium and calcium reabsorption. Forms paracellular barriers on its own. In the peripheral nervous system, represents a major constituent of the tight junctions in Schwann cells and contributes to electrical sealing. During retinal neurogenesis, may regulate the barrier properties of tight junctions in retinal pigment epithelium, required for proper retinal tissue differentiation and vision. This chain is Claudin-19, found in Homo sapiens (Human).